Consider the following 291-residue polypeptide: Secreted effector protein PipB (291 aa).

2 Pentapeptide repeat domains span residues 154–193 (LNLR…NLVG) and 199–238 (ANLH…ILFG).

Its subcellular location is the secreted. The protein localises to the host membrane. In terms of biological role, effector proteins function to alter host cell physiology and promote bacterial survival in host tissues. Does not appear to be required for the formation or the maintenance of either Salmonella-containing vacuole (SCV) or the Salmonella-induced filaments (Sifs). Not required for intracellular replication in phagocytic cells. This is Secreted effector protein PipB (pipB) from Salmonella typhimurium (strain LT2 / SGSC1412 / ATCC 700720).